The following is a 549-amino-acid chain: Chaperonin GroEL (549 aa).

Residues 30-33 (TLGP), Lys51, 87-91 (DGTTT), Gly415, 479-481 (NAA), and Asp495 contribute to the ATP site.

It belongs to the chaperonin (HSP60) family. As to quaternary structure, forms a cylinder of 14 subunits composed of two heptameric rings stacked back-to-back. Interacts with the co-chaperonin GroES.

The protein localises to the cytoplasm. The catalysed reaction is ATP + H2O + a folded polypeptide = ADP + phosphate + an unfolded polypeptide.. In terms of biological role, together with its co-chaperonin GroES, plays an essential role in assisting protein folding. The GroEL-GroES system forms a nano-cage that allows encapsulation of the non-native substrate proteins and provides a physical environment optimized to promote and accelerate protein folding. The chain is Chaperonin GroEL from Leptothrix cholodnii (strain ATCC 51168 / LMG 8142 / SP-6) (Leptothrix discophora (strain SP-6)).